A 450-amino-acid chain; its full sequence is MSELSVATGAVSTASSSIPMPAGVNPADLAAELAAVVTESVDEDYLLYECDGQWVLAAGVQAMVELDSDELRVIRDGVTRRQQWSGRPGAALGEAVDRLLLETDQAFGWVAFEFGVHRYGLQQRLAPHTPLARVFSPRTRIMVSEKEIRLFDAGIRHREAIDRLLATGVREVPQSRSVDVSDDPSGFRRRVAVAVDEIAAGRYHKVILSRCVEVPFAIDFPLTYRLGRRHNTPVRSFLLQLGGIRALGYSPELVTAVRADGVVITEPLAGTRALGRGPAIDRLARDDLESNSKEIVEHAISVRSSLEEITDIAEPGSAAVIDFMTVRERGSVQHLGSTIRARLDPSSDRMAALEALFPAVTASGIPKAAGVEAIFRLDECPRGLYSGAVVMLSADGGLDAALTLRAAYQVGGRTWLRAGAGIIEESEPEREFEETCEKLSTLTPYLVARQ.

E252 (proton donor) is an active-site residue. 270 to 271 (GT) provides a ligand contact to substrate. E297 is a binding site for Mg(2+). Substrate-binding positions include Y385, R405, and 419–421 (GAG). Residues E431 and E434 each contribute to the Mg(2+) site. Residue K438 participates in substrate binding.

This sequence belongs to the anthranilate synthase component I family. Salicylate synthase subfamily. Monomer. Requires Mg(2+) as cofactor.

It catalyses the reaction chorismate = isochorismate. The catalysed reaction is isochorismate = salicylate + pyruvate. It carries out the reaction chorismate = prephenate. The protein operates within siderophore biosynthesis; mycobactin biosynthesis. Involved in the incorporation of salicylate into the virulence-conferring salicylate-based siderophore mycobactin. Catalyzes the initial conversion of chorismate to yield the intermediate isochorismate (isochorismate synthase activity), and the subsequent elimination of the enolpyruvyl side chain in a lyase reaction to give salicylate (isochorismate pyruvate-lyase activity). In the absence of magnesium, MbtI displays a chorismate mutase activity and converts chorismate to prephenate. The protein is Salicylate synthase (mbtI) of Mycobacterium bovis (strain ATCC BAA-935 / AF2122/97).